Consider the following 427-residue polypeptide: A-adding tRNA nucleotidyltransferase (427 aa).

Position 49 to 52 (49 to 52 (GTVR)) interacts with ATP. Mg(2+)-binding residues include aspartate 62 and aspartate 64. ATP is bound by residues 136-137 (RD), asparagine 141, 181-190 (DPTRLLRGVR), arginine 194, and arginine 225.

This sequence belongs to the tRNA nucleotidyltransferase/poly(A) polymerase family. Mg(2+) serves as cofactor.

The enzyme catalyses a tRNA with a 3' CC end + ATP = a tRNA with a 3' CCA end + diphosphate. TRNA nucleotidyltransferase involved in the synthesis of the tRNA CCA terminus. Adds the terminal adenosine residue to tRNA. The polypeptide is A-adding tRNA nucleotidyltransferase (Halalkalibacterium halodurans (strain ATCC BAA-125 / DSM 18197 / FERM 7344 / JCM 9153 / C-125) (Bacillus halodurans)).